Reading from the N-terminus, the 245-residue chain is Orotidine 5'-phosphate decarboxylase (245 aa).

Residues D22, K44, 71–80 (DLKFHDIPNT), T131, R192, Q201, G221, and R222 each bind substrate. K73 serves as the catalytic Proton donor.

Belongs to the OMP decarboxylase family. Type 1 subfamily. As to quaternary structure, homodimer.

The enzyme catalyses orotidine 5'-phosphate + H(+) = UMP + CO2. It functions in the pathway pyrimidine metabolism; UMP biosynthesis via de novo pathway; UMP from orotate: step 2/2. In terms of biological role, catalyzes the decarboxylation of orotidine 5'-monophosphate (OMP) to uridine 5'-monophosphate (UMP). This is Orotidine 5'-phosphate decarboxylase from Escherichia coli O139:H28 (strain E24377A / ETEC).